A 379-amino-acid chain; its full sequence is Nitric oxide reductase FlRd-NAD(+) reductase (379 aa).

The protein belongs to the FAD-dependent oxidoreductase family. FAD serves as cofactor.

It is found in the cytoplasm. It carries out the reaction 2 reduced [nitric oxide reductase rubredoxin domain] + NAD(+) + H(+) = 2 oxidized [nitric oxide reductase rubredoxin domain] + NADH. It participates in nitrogen metabolism; nitric oxide reduction. Functionally, one of at least two accessory proteins for anaerobic nitric oxide (NO) reductase. Reduces the rubredoxin moiety of NO reductase. The polypeptide is Nitric oxide reductase FlRd-NAD(+) reductase (Pectobacterium atrosepticum (strain SCRI 1043 / ATCC BAA-672) (Erwinia carotovora subsp. atroseptica)).